Reading from the N-terminus, the 375-residue chain is AA9 family lytic polysaccharide monooxygenase CEL1 (375 aa).

Positions 1 to 16 are cleaved as a signal peptide; that stretch reads MLFPALALLCPVLVAA. Cu(2+) is bound at residue histidine 119. Cysteine 130 and cysteine 135 are oxidised to a cystine. A glycan (N-linked (GlcNAc...) asparagine) is linked at asparagine 132. Histidine 196 is a binding site for O2. Asparagine 197 carries N-linked (GlcNAc...) asparagine glycosylation. Residue tyrosine 212 participates in Cu(2+) binding. Cysteine 232 and cysteine 237 are disulfide-bonded. A disordered region spans residues 287–375; sequence NGMSSSPSSS…RSRVAHLDRH (89 aa). Residues 290–341 show a composition bias toward low complexity; the sequence is SSSPSSSSGVSSSSSSSVASSDTSDSTTSSGVVAVNVSAASSPSSSISANSA. The N-linked (GlcNAc...) asparagine glycan is linked to asparagine 325. A compositionally biased stretch (basic residues) spans 347–369; the sequence is KTCKRKKRSKIAGQKRHIHRSRV.

The protein belongs to the polysaccharide monooxygenase AA9 family. Cu(2+) serves as cofactor.

Its subcellular location is the secreted. The protein localises to the cell wall. It carries out the reaction [(1-&gt;4)-beta-D-glucosyl]n+m + reduced acceptor + O2 = 4-dehydro-beta-D-glucosyl-[(1-&gt;4)-beta-D-glucosyl]n-1 + [(1-&gt;4)-beta-D-glucosyl]m + acceptor + H2O.. Lytic polysaccharide monooxygenase (LPMO) that depolymerizes polysaccharides via the oxidation of scissile alpha- or beta-(1-4)-glycosidic bonds, yielding C4 oxidation products. Catalysis by LPMOs requires the reduction of the active-site copper from Cu(II) to Cu(I) by a reducing agent and H(2)O(2) or O(2) as a cosubstrate. Required for the expression of stress response phenotypes, including thermotolerance, cell wall integrity, and efficient cell cycle progression. Promotes intrinsic fungal cell wall remodeling events required for efficient adaptation to the host environment. Required for virulence in a murine inhalational model of cryptococcal infection as well as in Galleria mellonella larvae. In Cryptococcus neoformans var. grubii serotype A (strain H99 / ATCC 208821 / CBS 10515 / FGSC 9487) (Filobasidiella neoformans var. grubii), this protein is AA9 family lytic polysaccharide monooxygenase CEL1.